The following is a 156-amino-acid chain: Large ribosomal subunit protein uL15 (156 aa).

Residues 1–13 show a composition bias toward basic and acidic residues; sequence MKLNEIKDNEGAT. Residues 1–41 are disordered; sequence MKLNEIKDNEGATKNRKRLGRGIGSGSGKTAGRGVKGQKAR. A compositionally biased stretch (gly residues) spans 21 to 35; the sequence is RGIGSGSGKTAGRGV.

This sequence belongs to the universal ribosomal protein uL15 family. As to quaternary structure, part of the 50S ribosomal subunit.

Binds to the 23S rRNA. This chain is Large ribosomal subunit protein uL15, found in Sinorhizobium medicae (strain WSM419) (Ensifer medicae).